Here is a 201-residue protein sequence, read N- to C-terminus: UPF0056 membrane protein PH0760 (201 aa).

6 helical membrane passes run 8–28 (FMILYTGMFAITNPIGAVPVF), 49–69 (ITVFITLTVFALVGQWIFKFF), 73–93 (IDAFAIAGGILLFRMGMEMLS), 111–131 (VAVIPLAIPLISGPGAITTVM), 140–160 (GIVILTIIAIGLTTYGILYSG), and 181–201 (LILTSMAMQMIINGIKGAFGI).

Belongs to the UPF0056 (MarC) family.

It localises to the cell membrane. The polypeptide is UPF0056 membrane protein PH0760 (Pyrococcus horikoshii (strain ATCC 700860 / DSM 12428 / JCM 9974 / NBRC 100139 / OT-3)).